We begin with the raw amino-acid sequence, 351 residues long: Glycerol-3-phosphate dehydrogenase 1-like protein (351 aa).

11–16 (GSGNWG) contributes to the NAD(+) binding site. Lys-121 provides a ligand contact to substrate. Ala-154 is a binding site for NAD(+). Catalysis depends on Lys-205, which acts as the Proton acceptor. NAD(+) contacts are provided by Arg-271, Lys-298, and Gln-300. 271–272 (RN) provides a ligand contact to substrate.

The protein belongs to the NAD-dependent glycerol-3-phosphate dehydrogenase family.

The protein resides in the cytoplasm. The catalysed reaction is sn-glycerol 3-phosphate + NAD(+) = dihydroxyacetone phosphate + NADH + H(+). Plays a role in regulating cardiac sodium current. This Danio rerio (Zebrafish) protein is Glycerol-3-phosphate dehydrogenase 1-like protein (gpd1l).